The sequence spans 203 residues: Holliday junction branch migration complex subunit RuvA (203 aa).

Residues Met-1–Ile-64 are domain I. The interval Thr-65 to Glu-143 is domain II. The interval Arg-144–Ala-154 is flexible linker. Positions Pro-155–Leu-203 are domain III.

This sequence belongs to the RuvA family. As to quaternary structure, homotetramer. Forms an RuvA(8)-RuvB(12)-Holliday junction (HJ) complex. HJ DNA is sandwiched between 2 RuvA tetramers; dsDNA enters through RuvA and exits via RuvB. An RuvB hexamer assembles on each DNA strand where it exits the tetramer. Each RuvB hexamer is contacted by two RuvA subunits (via domain III) on 2 adjacent RuvB subunits; this complex drives branch migration. In the full resolvosome a probable DNA-RuvA(4)-RuvB(12)-RuvC(2) complex forms which resolves the HJ.

The protein resides in the cytoplasm. Its function is as follows. The RuvA-RuvB-RuvC complex processes Holliday junction (HJ) DNA during genetic recombination and DNA repair, while the RuvA-RuvB complex plays an important role in the rescue of blocked DNA replication forks via replication fork reversal (RFR). RuvA specifically binds to HJ cruciform DNA, conferring on it an open structure. The RuvB hexamer acts as an ATP-dependent pump, pulling dsDNA into and through the RuvAB complex. HJ branch migration allows RuvC to scan DNA until it finds its consensus sequence, where it cleaves and resolves the cruciform DNA. This is Holliday junction branch migration complex subunit RuvA from Shewanella denitrificans (strain OS217 / ATCC BAA-1090 / DSM 15013).